Here is a 366-residue protein sequence, read N- to C-terminus: Chorismate synthase (366 aa).

Residues arginine 48 and arginine 54 each coordinate NADP(+). FMN-binding positions include 125 to 127 (RSS), 238 to 239 (NA), glycine 278, 293 to 297 (KPTSS), and arginine 319.

This sequence belongs to the chorismate synthase family. As to quaternary structure, homotetramer. It depends on FMNH2 as a cofactor.

The enzyme catalyses 5-O-(1-carboxyvinyl)-3-phosphoshikimate = chorismate + phosphate. It functions in the pathway metabolic intermediate biosynthesis; chorismate biosynthesis; chorismate from D-erythrose 4-phosphate and phosphoenolpyruvate: step 7/7. Its function is as follows. Catalyzes the anti-1,4-elimination of the C-3 phosphate and the C-6 proR hydrogen from 5-enolpyruvylshikimate-3-phosphate (EPSP) to yield chorismate, which is the branch point compound that serves as the starting substrate for the three terminal pathways of aromatic amino acid biosynthesis. This reaction introduces a second double bond into the aromatic ring system. The polypeptide is Chorismate synthase (Dechloromonas aromatica (strain RCB)).